A 490-amino-acid polypeptide reads, in one-letter code: MPFTLAIVGRPNVGKSTLFNRLVGKRLALVDDQPGVTRDLREGAARLGDLRFTVIDTAGLEEATDDSLQGRMRRLTERAVSMADACLFLIDARVGVTPTDEVFADILRRSNAHVLLGANKAEGRAAEAGLIEAYALGLGEPLALSAEHGEGMAELTGALMPLIDAFEETENAETEDAPETDVALDPDAEEETVVRVPTKAKPLQVAVVGRPNAGKSTLINQLLGEDRLLTGPEAGITRDAISLAMDWDGLPVRIFDTAGMRKKAKVQEKLEKLSVSDGLRAVKFAEVVVVLLDAGIPFEQQDLRIADLAEREGRAVVIAVNKWDMEDDKQGKLKELKEAFERLLPQLRGAPLVTVSAKTGRGMDRLRDAVLRAHEVWNRRVPTAALNRWLGAMVEAHPPPAPGGRRIKLRYMTQAKTRPPGFVVMCSYPEKIPESYTRYLVNGLREDFDMPGTPIRLTMRSQSDANPYKNRKKSTPSRLRKHLGKPSLKG.

2 EngA-type G domains span residues 3 to 167 and 203 to 378; these read FTLA…DAFE and LQVA…EVWN. Residues 9-16, 56-60, 119-122, 209-216, 256-260, and 321-324 contribute to the GTP site; these read GRPNVGKS, DTAGL, NKAE, GRPNAGKS, DTAGM, and NKWD. In terms of domain architecture, KH-like spans 379 to 465; sequence RRVPTAALNR…RLTMRSQSDA (87 aa). A disordered region spans residues 451-490; the sequence is PGTPIRLTMRSQSDANPYKNRKKSTPSRLRKHLGKPSLKG. Positions 469–484 are enriched in basic residues; the sequence is KNRKKSTPSRLRKHLG.

This sequence belongs to the TRAFAC class TrmE-Era-EngA-EngB-Septin-like GTPase superfamily. EngA (Der) GTPase family. Associates with the 50S ribosomal subunit.

Functionally, GTPase that plays an essential role in the late steps of ribosome biogenesis. This Dinoroseobacter shibae (strain DSM 16493 / NCIMB 14021 / DFL 12) protein is GTPase Der.